The sequence spans 365 residues: P43 5S RNA-binding protein (365 aa).

C2H2-type zinc fingers lie at residues 15–39 (LRCP…MAGH), 45–69 (WKCG…VKRH), 75–100 (LSCP…LYKH), 106–130 (LKCF…LSVH), 136–160 (SVCD…QKRH), 163–187 (YRCS…VKKH), 191–213 (LQCA…KATH), 220–245 (LPCP…RKLH), and 251–275 (HRCP…LVVH).

As to quaternary structure, the 42S RNP particle comprises four subunits each of which contains one molecule of 5S RNA, three molecules of tRNA, two molecules of p50 (EF1-alpha) and one molecule of the 5S RNA binding protein 43.

Functionally, p43 is a 5S RNA binding protein which is a major constituent of oocytes and comprises part of a 42S ribonucleoprotein storage particle. The polypeptide is P43 5S RNA-binding protein (Xenopus laevis (African clawed frog)).